Here is a 168-residue protein sequence, read N- to C-terminus: Small ribosomal subunit protein uS8 (168 aa).

The interval 59–93 is not found in other S8 sequences; it reads EEFKKMKELAEKSPNPKMRRYLQQLIDYNKGTQYP.

This sequence belongs to the universal ribosomal protein uS8 family. As to quaternary structure, part of the 30S ribosomal subunit. Contacts proteins S5 and S12.

One of the primary rRNA binding proteins, it binds directly to 16S rRNA central domain where it helps coordinate assembly of the platform of the 30S subunit. In Aquifex pyrophilus, this protein is Small ribosomal subunit protein uS8.